A 1481-amino-acid polypeptide reads, in one-letter code: Cystic fibrosis transmembrane conductance regulator (1481 aa).

Residues 1–77 (MQRSPLEKAS…KLINALRRCF (77 aa)) are Cytoplasmic-facing. The chain crosses the membrane as a helical span at residues 78-98 (FWRFMFYGILLYLGEVTKAVQ). The region spanning 81 to 365 (FMFYGILLYL…WAVQTWYDSL (285 aa)) is the ABC transmembrane type-1 1 domain. Over 99–122 (PLLLGRIIASYDPDNKEERSIAIY) the chain is Extracellular. Residues 123 to 146 (LGIGLCLLFIVRTLLLHPAIFGLH) form a helical membrane-spanning segment. Over 147 to 195 (HIGMQMRIAMFSLIYKKTLKLSSRVLDKISIGQLVSLLSNNLNKFDEGL) the chain is Cytoplasmic. A helical transmembrane segment spans residues 196–216 (ALAHFVWIVPLQVALLMGLIW). Residues 217-222 (ELLQAS) lie on the Extracellular side of the membrane. Residues 223 to 243 (AFCGLGFLIVLALFQAGLGRM) traverse the membrane as a helical segment. The Cytoplasmic portion of the chain corresponds to 244 to 298 (MMKYRDQRAGKINERLVITSEMIENIQSVKAYCWEEAMEKMIENLRQTELKLTRK). A helical membrane pass occupies residues 299-319 (AAYVRYFNSSAFFFSGFFVVF). Topologically, residues 320–339 (LSVLPYALIKGIVLRKIFTT) are extracellular. Residues 340-358 (ISFCIVLRMAVTRQFPWAV) form a helical membrane-spanning segment. The Cytoplasmic portion of the chain corresponds to 359–858 (QTWYDSLGAI…YLRYITVHKS (500 aa)). ATP is bound by residues Trp-401, Ser-434, 458-465 (GSTGAGKT), and Gln-493. The ABC transporter 1 domain maps to 423 to 646 (NDDDSLFFSN…RPDFSSKLMG (224 aa)). The S-palmitoyl cysteine moiety is linked to residue Cys-524. Ser-549 and Ser-660 each carry phosphoserine. Residues 654-831 (SAERRNSILT…EEINEEDLKE (178 aa)) are disordered R region. Ser-670 is subject to Phosphoserine; by PKA. Ser-686 carries the post-translational modification Phosphoserine. A Glycyl lysine isopeptide (Lys-Gly) (interchain with G-Cter in ubiquitin) cross-link involves residue Lys-688. Phosphoserine occurs at positions 700 and 712. Residue Thr-717 is modified to Phosphothreonine. Ser-737, Ser-753, Ser-768, Ser-790, Ser-795, and Ser-813 each carry phosphoserine. The chain crosses the membrane as a helical span at residues 859–879 (LIFVLIWCLVIFLAEVAASLV). In terms of domain architecture, ABC transmembrane type-1 2 spans 859–1155 (LIFVLIWCLV…AVNSSIDVDS (297 aa)). Residues 880 to 918 (VLWFLGNTPPQDKGNSTYSRNNSYAVIITRTSSYYVFYI) are Extracellular-facing. N-linked (GlcNAc...) asparagine glycans are attached at residues Asn-894 and Asn-900. Residues 919-939 (YVGVADTLLAMGFFRGLPLVH) traverse the membrane as a discontinuously helical segment. Residues 940 to 990 (TLITVSKILHHKMLHSVLQAPMSTLNTLKAGGILNRFSKDIAILDDLLPLT) are Cytoplasmic-facing. Residues 991–1011 (IFDFIQLLLIVIGAIAVVAVL) form a helical membrane-spanning segment. Residues 1012–1013 (QP) lie on the Extracellular side of the membrane. A helical transmembrane segment spans residues 1014 to 1034 (YIFVATVPVIVAFIMLRAYFL). The Cytoplasmic segment spans residues 1035–1095 (QTSQQLKQLE…TANWFLYLST (61 aa)). A helical membrane pass occupies residues 1096 to 1116 (LRWFQMRIEMIFVIFFIAVTF). Over 1117–1130 (ISILTTGEGEGTVG) the chain is Extracellular. The chain crosses the membrane as a helical span at residues 1131–1151 (IILTLAMNIMSTLQWAVNSSI). Residues 1152 to 1481 (DVDSLMRSVS…TEEEVQDTRL (330 aa)) are Cytoplasmic-facing. The region spanning 1211-1444 (MTVKDLTAKY…RSLFRQAISP (234 aa)) is the ABC transporter 2 domain. ATP-binding positions include Tyr-1220 and 1245–1252 (GRTGSGKS). Residues 1387-1481 (RTLKQAFADC…TEEEVQDTRL (95 aa)) are interaction with GORASP2. Cys-1396 carries S-palmitoyl cysteine lipidation. A phosphoserine mark is found at Ser-1445 and Ser-1457. Positions 1462–1481 (QPQIAALKEETEEEVQDTRL) are disordered. Positions 1471 to 1481 (ETEEEVQDTRL) are enriched in acidic residues. The short motif at 1479-1481 (TRL) is the PDZ-binding element.

This sequence belongs to the ABC transporter superfamily. ABCC family. CFTR transporter (TC 3.A.1.202) subfamily. As to quaternary structure, monomer; does not require oligomerization for channel activity. May form oligomers in the membrane. Interacts with SLC26A3, SLC26A6 and NHERF1. Interacts with SHANK2. Interacts with MYO6. Interacts (via C-terminus) with GOPC (via PDZ domain); this promotes CFTR internalization and thereby decreases channel activity. Interacts with SLC4A7 through NHERF1. Found in a complex with MYO5B and RAB11A. Interacts with ANO1. Interacts with SLC26A8. Interacts with AHCYL1; the interaction increases CFTR activity. Interacts with CSE1L. The core-glycosylated form interacts with GORASP2 (via PDZ GRASP-type 1 domain) in respone to ER stress. Interacts with MARCHF2; the interaction leads to CFTR ubiqtuitination and degradation. Interacts with ADGRG2. Post-translationally, N-glycosylated. In terms of processing, phosphorylated; cAMP treatment promotes phosphorylation and activates the channel. Dephosphorylation decreases the ATPase activity (in vitro). Phosphorylation at PKA sites activates the channel. Phosphorylation at PKC sites enhances the response to phosphorylation by PKA. Phosphorylated by AMPK; this inhibits channel activity. Ubiquitinated, leading to its degradation in the lysosome. Deubiquitination by USP10 in early endosomes enhances its endocytic recycling to the cell membrane. Ubiquitinated by RNF185 during ER stress. Ubiquitinated by MARCHF2.

It is found in the apical cell membrane. It localises to the early endosome membrane. The protein localises to the cell membrane. The protein resides in the recycling endosome membrane. Its subcellular location is the endoplasmic reticulum membrane. It is found in the nucleus. The enzyme catalyses ATP + H2O + closed Cl(-) channel = ADP + phosphate + open Cl(-) channel.. It catalyses the reaction chloride(in) = chloride(out). The catalysed reaction is hydrogencarbonate(in) = hydrogencarbonate(out). It carries out the reaction ATP + H2O = ADP + phosphate + H(+). Its function is as follows. Epithelial ion channel that plays an important role in the regulation of epithelial ion and water transport and fluid homeostasis. Mediates the transport of chloride ions across the cell membrane. Possesses an intrinsic ATPase activity and utilizes ATP to gate its channel; the passive flow of anions through the channel is gated by cycles of ATP binding and hydrolysis by the ATP-binding domains. The ion channel is also permeable to HCO(3)(-); selectivity depends on the extracellular chloride concentration. Exerts its function also by modulating the activity of other ion channels and transporters. Contributes to the regulation of the pH and the ion content of the epithelial fluid layer. Modulates the activity of the epithelial sodium channel (ENaC) complex, in part by regulating the cell surface expression of the ENaC complex. May regulate bicarbonate secretion and salvage in epithelial cells by regulating the transporter SLC4A7. Can inhibit the chloride channel activity of ANO1. Plays a role in the chloride and bicarbonate homeostasis during sperm epididymal maturation and capacitation. This Chlorocebus aethiops (Green monkey) protein is Cystic fibrosis transmembrane conductance regulator.